Here is a 158-residue protein sequence, read N- to C-terminus: UPF0260 protein RL1394 (158 aa).

It belongs to the UPF0260 family.

This Rhizobium johnstonii (strain DSM 114642 / LMG 32736 / 3841) (Rhizobium leguminosarum bv. viciae) protein is UPF0260 protein RL1394.